A 235-amino-acid chain; its full sequence is Centromere protein H (235 aa).

Residues 1 to 23 (MAGRLSESVGSGPGAEAETAADP) are disordered. Residues 125–145 (EIIQAHQQARVIRENLNDIRR) are a coiled coil.

Belongs to the CENP-H/MCM16 family. In terms of assembly, component of the CENPA-HI complex, at least composed of CENPH, CENPI, CENPK, CENPL, CENPM, CENPO and CENPP. Interacts with NDC80.

Its subcellular location is the nucleus. It localises to the chromosome. The protein resides in the centromere. It is found in the kinetochore. Functionally, component of the CENPA-HI complex, a centromeric complex involved in assembly of kinetochore proteins, mitotic progression and chromosome segregation. Required for the localization of CENPC but not CENPA to the centromere. It however may be involved in incorporation of newly synthesized CENPA into centromeres via its interaction with the CENPA-NAC complex. This chain is Centromere protein H (CENPH), found in Gallus gallus (Chicken).